The following is a 557-amino-acid chain: 2-succinyl-5-enolpyruvyl-6-hydroxy-3-cyclohexene-1-carboxylate synthase (557 aa).

Belongs to the TPP enzyme family. MenD subfamily. Homodimer. The cofactor is Mg(2+). Mn(2+) serves as cofactor. Thiamine diphosphate is required as a cofactor.

The enzyme catalyses isochorismate + 2-oxoglutarate + H(+) = 5-enolpyruvoyl-6-hydroxy-2-succinyl-cyclohex-3-ene-1-carboxylate + CO2. It participates in quinol/quinone metabolism; 1,4-dihydroxy-2-naphthoate biosynthesis; 1,4-dihydroxy-2-naphthoate from chorismate: step 2/7. It functions in the pathway quinol/quinone metabolism; menaquinone biosynthesis. Functionally, catalyzes the thiamine diphosphate-dependent decarboxylation of 2-oxoglutarate and the subsequent addition of the resulting succinic semialdehyde-thiamine pyrophosphate anion to isochorismate to yield 2-succinyl-5-enolpyruvyl-6-hydroxy-3-cyclohexene-1-carboxylate (SEPHCHC). This chain is 2-succinyl-5-enolpyruvyl-6-hydroxy-3-cyclohexene-1-carboxylate synthase, found in Serratia proteamaculans (strain 568).